The chain runs to 188 residues: Cytochrome b-245 chaperone 1 homolog (188 aa).

The helical transmembrane segment at Ser20 to Thr42 threads the bilayer.

Belongs to the CYBC1 family.

The protein localises to the endoplasmic reticulum membrane. Its function is as follows. Functions as a chaperone necessary for a stable expression of the CYBA and CYBB subunits of the cytochrome b-245 heterodimer. In Xenopus laevis (African clawed frog), this protein is Cytochrome b-245 chaperone 1 homolog (cybc1).